The following is a 468-amino-acid chain: SVGFKAGVKEYKLTYYTPEYQTKDTDILAAFRVTPQPGVPPEEAGAAVAAESSTGTWTTVWTDGLTSLDRYKGRCYRIERVVGEKDQYIAYVAYPLDLFEEGSVTNMFTSIVGNVFGFKALRALRLEDLRIPPAYVKTFQGPPHGIQVERDKLNKYGRPLLGCTIKPKLGLSAKNYGRAVYECLRGGLDFTKDDENVNSQPFMRWRDRFLFCAEALYKAQAETGEIKGHYLNATAGTCEEMIKRAVFARELGVPIVMHDYLTGGFTANTSLAHYCRDNGLLLHIHRAMHAVIDRQKNHGIHFRVLAKALRMSGGDHIHSGTVVGKLEGERDITLGFVDLLRDDFVEQDRSRGIYFTQDWVSLPGVLPVASGGIHVWHMPALTEIFGDDSVLQFGGGTLGHPWGNAPGAVANRVALEACVKARNEGRDLAQEGNQIIREACKWSPELAAACEVWKEIVFNFAAVDVLDK.

At Lys5 the chain carries N6,N6,N6-trimethyllysine. Residues Asn114 and Thr164 each contribute to the substrate site. Lys166 functions as the Proton acceptor in the catalytic mechanism. Lys168 is a binding site for substrate. Positions 192, 194, and 195 each coordinate Mg(2+). Lys192 carries the post-translational modification N6-carboxylysine. His285 (proton acceptor) is an active-site residue. Substrate-binding residues include Arg286, His318, and Ser370.

Belongs to the RuBisCO large chain family. Type I subfamily. In terms of assembly, heterohexadecamer of 8 large chains and 8 small chains; disulfide-linked. The disulfide link is formed within the large subunit homodimers. Mg(2+) is required as a cofactor. Post-translationally, the disulfide bond which can form in the large chain dimeric partners within the hexadecamer appears to be associated with oxidative stress and protein turnover.

It localises to the plastid. The protein localises to the chloroplast. It carries out the reaction 2 (2R)-3-phosphoglycerate + 2 H(+) = D-ribulose 1,5-bisphosphate + CO2 + H2O. The catalysed reaction is D-ribulose 1,5-bisphosphate + O2 = 2-phosphoglycolate + (2R)-3-phosphoglycerate + 2 H(+). RuBisCO catalyzes two reactions: the carboxylation of D-ribulose 1,5-bisphosphate, the primary event in carbon dioxide fixation, as well as the oxidative fragmentation of the pentose substrate in the photorespiration process. Both reactions occur simultaneously and in competition at the same active site. This is Ribulose bisphosphate carboxylase large chain from Nolana spathulata (Chilean bell flower).